A 259-amino-acid polypeptide reads, in one-letter code: Ribosome maturation factor RimP (259 aa).

The span at 186-195 shows a compositional bias: basic and acidic residues; it reads RGKQAERELK. Positions 186 to 259 are disordered; it reads RGKQAERELK…RGDTDLSEGD (74 aa). Over residues 239 to 248 the composition is skewed to basic residues; sequence KQHRLAAGRS.

Belongs to the RimP family.

It is found in the cytoplasm. Required for maturation of 30S ribosomal subunits. The protein is Ribosome maturation factor RimP of Rhodopseudomonas palustris (strain HaA2).